Consider the following 591-residue polypeptide: L-fucose isomerase (591 aa).

Catalysis depends on proton acceptor residues glutamate 337 and aspartate 361. Positions 337, 361, and 528 each coordinate Mn(2+).

It belongs to the L-fucose isomerase family. As to quaternary structure, homohexamer. The cofactor is Mn(2+).

The protein resides in the cytoplasm. The catalysed reaction is L-fucose = L-fuculose. Its pathway is carbohydrate degradation; L-fucose degradation; L-lactaldehyde and glycerone phosphate from L-fucose: step 1/3. Functionally, converts the aldose L-fucose into the corresponding ketose L-fuculose. The polypeptide is L-fucose isomerase (Shigella dysenteriae serotype 1 (strain Sd197)).